A 294-amino-acid chain; its full sequence is Putative sugar lactone lactonase (294 aa).

A divalent metal cation-binding residues include E21, N150, and D201. D201 acts as the Proton donor/acceptor in catalysis.

It belongs to the SMP-30/CGR1 family. Requires a divalent metal cation as cofactor.

In terms of biological role, involved in the degradation of galactose via the DeLey-Doudoroff pathway. This chain is Putative sugar lactone lactonase, found in Rhizobium meliloti (strain 1021) (Ensifer meliloti).